Consider the following 1432-residue polypeptide: uncharacterized protein (1432 aa).

Disordered regions lie at residues 1-72, 208-237, 280-335, 531-607, 690-712, 738-801, 896-950, 1044-1076, and 1303-1359; these read MDTI…NYYN, NKIE…NNGQ, ERNE…ENNL, IVKS…NNSS, QNKS…TTTT, NNTL…NGGR, QSNN…SPPT, NINS…NNNN, and NNNN…NTTP. Composition is skewed to low complexity over residues 14–72, 208–225, and 284–300; these read INNN…NYYN, NKIE…NNEN, and LTSP…LPSS. Residues 315-325 show a composition bias toward acidic residues; the sequence is QEEEEEEEEED. Low complexity-rich tracts occupy residues 536–575, 583–607, 691–712, 744–779, and 896–944; these read SSSN…NKNK, DNNT…NNSS, NKSP…TTTT, NMNN…NSNN, and QSNN…SSSN. The span at 1311–1320 shows a compositional bias: gly residues; it reads NGNGNGGING. The span at 1321–1333 shows a compositional bias: low complexity; that stretch reads NNGNNSGSNNKEN. The span at 1334–1346 shows a compositional bias: gly residues; that stretch reads GGTGAGIGGGGGL. A compositionally biased stretch (low complexity) spans 1347 to 1359; that stretch reads QLPNNNNNNNTTP.

This is an uncharacterized protein from Dictyostelium discoideum (Social amoeba).